Reading from the N-terminus, the 495-residue chain is Protein-serine O-palmitoleoyltransferase porcupine (495 aa).

8 consecutive transmembrane segments (helical) span residues 46–66, 92–112, 184–204, 232–252, 358–378, 403–422, 434–454, and 475–495; these read TQYI…VLIV, VIDH…AVQW, TVLS…GPWI, MLIH…FLLT, PFGT…LHGL, LATI…SCTV, VINM…GCIF, and TELN…YFVI. Histidine 376 is an active-site residue.

The protein belongs to the membrane-bound acyltransferase family. Porcupine subfamily.

Its subcellular location is the endoplasmic reticulum membrane. It carries out the reaction [Wnt protein]-L-serine + (9Z)-hexadecenoyl-CoA = [Wnt protein]-O-(9Z)-hexadecenoyl-L-serine + CoA. Protein-serine O-palmitoleoyltransferase that acts as a key regulator of the Wnt signaling pathway by mediating the attachment of palmitoleate, a 16-carbon monounsaturated fatty acid (C16:1(9Z)), to Wnt proteins. Serine palmitoleoylation of WNT proteins is required for efficient binding to frizzled receptors. The protein is Protein-serine O-palmitoleoyltransferase porcupine of Anopheles gambiae (African malaria mosquito).